The primary structure comprises 100 residues: NADH-quinone oxidoreductase subunit K (100 aa).

The next 3 helical transmembrane spans lie at 4–24 (TSYY…GVLI), 29–49 (LVLF…LVTF), and 60–80 (IVVF…LALL).

This sequence belongs to the complex I subunit 4L family. In terms of assembly, NDH-1 is composed of 14 different subunits. Subunits NuoA, H, J, K, L, M, N constitute the membrane sector of the complex.

It localises to the cell membrane. It carries out the reaction a quinone + NADH + 5 H(+)(in) = a quinol + NAD(+) + 4 H(+)(out). Its function is as follows. NDH-1 shuttles electrons from NADH, via FMN and iron-sulfur (Fe-S) centers, to quinones in the respiratory chain. The immediate electron acceptor for the enzyme in this species is believed to be ubiquinone. Couples the redox reaction to proton translocation (for every two electrons transferred, four hydrogen ions are translocated across the cytoplasmic membrane), and thus conserves the redox energy in a proton gradient. The protein is NADH-quinone oxidoreductase subunit K of Roseiflexus sp. (strain RS-1).